Reading from the N-terminus, the 425-residue chain is Tyrosine--tRNA ligase (425 aa).

An L-tyrosine-binding site is contributed by Tyr37. The 'HIGH' region signature appears at 42-51 (PTADSLHLGH). L-tyrosine is bound by residues Tyr175 and Gln179. Positions 235-239 (KFGKT) match the 'KMSKS' region motif. Position 238 (Lys238) interacts with ATP. The S4 RNA-binding domain maps to 357-415 (QDLQQALVNAELAPSRGQARKLIEAKSVSINGSLQTDAEYTFGEDDRLFGQYTLLRRGK).

This sequence belongs to the class-I aminoacyl-tRNA synthetase family. TyrS type 1 subfamily. Homodimer.

It localises to the cytoplasm. It carries out the reaction tRNA(Tyr) + L-tyrosine + ATP = L-tyrosyl-tRNA(Tyr) + AMP + diphosphate + H(+). Catalyzes the attachment of tyrosine to tRNA(Tyr) in a two-step reaction: tyrosine is first activated by ATP to form Tyr-AMP and then transferred to the acceptor end of tRNA(Tyr). In Erwinia tasmaniensis (strain DSM 17950 / CFBP 7177 / CIP 109463 / NCPPB 4357 / Et1/99), this protein is Tyrosine--tRNA ligase.